A 375-amino-acid polypeptide reads, in one-letter code: Platelet-derived growth factor receptor-like protein (375 aa).

A signal peptide spans 1–21 (MKVWLLLGLLLVHEALEDVTG). Residues 22 to 64 (QHLPKNKRPKEPGENRIKPTNKKVKPKIPKIKDRDSADSTPKT) form a disordered region. Over residues 40–50 (PTNKKVKPKIP) the composition is skewed to basic residues. The region spanning 62–159 (PKTQSIMMQV…GYICRKDETK (98 aa)) is the Ig-like C2-type 1 domain. An intrachain disulfide couples Cys-96 to Cys-143. 2 N-linked (GlcNAc...) asparagine glycosylation sites follow: Asn-132 and Asn-219. An Ig-like C2-type 2 domain is found at 272 to 375 (PSTTILASSN…TTVATTVEFS (104 aa)). The cysteines at positions 293 and 357 are disulfide-linked.

Forms a complex composed of PDGFRL, TNK2 and GRB2.

The protein localises to the secreted. The sequence is that of Platelet-derived growth factor receptor-like protein (PDGFRL) from Macaca fascicularis (Crab-eating macaque).